Here is a 105-residue protein sequence, read N- to C-terminus: DNA-binding transcriptional regulator BolA (105 aa).

The protein belongs to the BolA/IbaG family.

Transcriptional regulator that plays an important role in general stress response. Has many effects on cell morphology, cell growth and cell division. Acts by regulating the transcription of many genes, including dacA (PBP-5), dacC (PBP-6), ampC and mreB. Probably involved in the coordination of genes that adapt the cell physiology in order to enhance cell adaptation and survival under stress conditions. Essential for normal cell morphology in stationary phase and under conditions of starvation. Also regulates a complex network of genes encoding proteins related to biofilm development, and negatively modulates flagellar biosynthesis and swimming capacity. Could be a motile/adhesive transcriptional switch, specifically involved in the transition between the planktonic and the attachment stage of biofilm formation. Overexpression produces round cell shape, impairs cell growth rate and induces biofilm development. This is DNA-binding transcriptional regulator BolA from Escherichia coli (strain K12).